Reading from the N-terminus, the 36-residue chain is Photosystem I reaction center subunit VIII (36 aa).

A helical membrane pass occupies residues 7–29 (PSILVPLVGILLPAVTMASLFLY).

The protein belongs to the PsaI family.

Its subcellular location is the plastid. It localises to the chloroplast thylakoid membrane. Its function is as follows. May help in the organization of the PsaL subunit. The polypeptide is Photosystem I reaction center subunit VIII (Adiantum capillus-veneris (Maidenhair fern)).